We begin with the raw amino-acid sequence, 370 residues long: DNA replication and repair protein RecF (370 aa).

30–37 (GENAQGKT) lines the ATP pocket.

It belongs to the RecF family.

It localises to the cytoplasm. The RecF protein is involved in DNA metabolism; it is required for DNA replication and normal SOS inducibility. RecF binds preferentially to single-stranded, linear DNA. It also seems to bind ATP. This is DNA replication and repair protein RecF from Bacillus pumilus (strain SAFR-032).